A 161-amino-acid chain; its full sequence is Phosphopantetheine adenylyltransferase (161 aa).

It belongs to the eukaryotic CoaD family.

It localises to the cytoplasm. It catalyses the reaction (R)-4'-phosphopantetheine + ATP + H(+) = 3'-dephospho-CoA + diphosphate. It participates in cofactor biosynthesis; coenzyme A biosynthesis. Its function is as follows. Reversibly transfers an adenylyl group from ATP to 4'-phosphopantetheine, yielding dephospho-CoA (dPCoA) and pyrophosphate. This is Phosphopantetheine adenylyltransferase from Methanosarcina barkeri (strain Fusaro / DSM 804).